We begin with the raw amino-acid sequence, 204 residues long: Large ribosomal subunit protein uL4 (204 aa).

Residues alanine 52 to arginine 76 are disordered.

The protein belongs to the universal ribosomal protein uL4 family. In terms of assembly, part of the 50S ribosomal subunit.

In terms of biological role, one of the primary rRNA binding proteins, this protein initially binds near the 5'-end of the 23S rRNA. It is important during the early stages of 50S assembly. It makes multiple contacts with different domains of the 23S rRNA in the assembled 50S subunit and ribosome. Functionally, forms part of the polypeptide exit tunnel. This is Large ribosomal subunit protein uL4 from Sulfurimonas denitrificans (strain ATCC 33889 / DSM 1251) (Thiomicrospira denitrificans (strain ATCC 33889 / DSM 1251)).